The following is a 224-amino-acid chain: Large ribosomal subunit protein bL25 (224 aa).

The interval 195–224 (TVEEVDEAAEVDAADVPATEQGTDESKDGE) is disordered. Over residues 197-207 (EEVDEAAEVDA) the composition is skewed to acidic residues.

Belongs to the bacterial ribosomal protein bL25 family. CTC subfamily. Part of the 50S ribosomal subunit; part of the 5S rRNA/L5/L18/L25 subcomplex. Contacts the 5S rRNA. Binds to the 5S rRNA independently of L5 and L18.

Functionally, this is one of the proteins that binds to the 5S RNA in the ribosome where it forms part of the central protuberance. In Psychrobacter cryohalolentis (strain ATCC BAA-1226 / DSM 17306 / VKM B-2378 / K5), this protein is Large ribosomal subunit protein bL25.